We begin with the raw amino-acid sequence, 1025 residues long: Multidrug resistance protein MdtC (1025 aa).

A run of 12 helical transmembrane segments spans residues 3–23 (FFAL…AITL), 333–353 (EVEQ…FLFL), 360–380 (IIPA…MYLC), 387–407 (LSLM…IVVL), 431–451 (VGFT…PLLL), 463–483 (FAVT…TLTP), 528–548 (LVGV…ISIP), 853–873 (VILI…LYES), 875–895 (VHPL…LLAL), 897–917 (LFNA…IGIV), 953–973 (PIMM…LSGG), and 984–1004 (ITIV…TPVV).

Belongs to the resistance-nodulation-cell division (RND) (TC 2.A.6) family. MdtC subfamily. In terms of assembly, part of a tripartite efflux system composed of MdtA, MdtB and MdtC. MdtC forms a heteromultimer with MdtB.

The protein localises to the cell inner membrane. This is Multidrug resistance protein MdtC from Shigella sonnei (strain Ss046).